Here is a 906-residue protein sequence, read N- to C-terminus: ATP-dependent DNA helicase DDX11 (906 aa).

One can recognise a Helicase ATP-binding domain in the interval 9 to 442 (GGIHFPFPFP…KNLMYIKQIL (434 aa)). 44–51 (SPTGTGKS) is a binding site for ATP. The segment at 78–111 (APGSGPPSSEKNSLLTSSSCQEPTDTPRPAGEPD) is disordered. Residues 85-96 (SSEKNSLLTSSS) show a composition bias toward low complexity. Serine 260 bears the Phosphoserine mark. The [4Fe-4S] cluster site is built by cysteine 265 and cysteine 283. Basic and acidic residues predominate over residues 284–301 (VDMQRSKREKNGTGEDKP). The segment at 284–310 (VDMQRSKREKNGTGEDKPKRKRQKIQT) is disordered. [4Fe-4S] cluster is bound by residues cysteine 312 and cysteine 347. The DEAH box signature appears at 390-393 (DEAH).

This sequence belongs to the DEAD box helicase family. DEAH subfamily. DDX11/CHL1 sub-subfamily. As to quaternary structure, associates with the CTF18-RFC complex. Associates with a cohesin complex composed of RAD21, SMC1 proteins and SMC3. Interacts with CHTF18. Interacts with DSCC1. Interacts with FEN1; this interaction is direct and increases flap endonuclease activity of FEN1. Interacts with PCNA. Interacts with POLR1A and UBTF. Interacts with RAD21, SMC1 proteins and SMC3. Interacts with RFC2. Interacts with TIMELESS; this interaction increases recruitment of both proteins onto chromatin in response to replication stress induction by hydroxyurea. The cofactor is [4Fe-4S] cluster.

The protein resides in the nucleus. Its subcellular location is the nucleolus. It localises to the cytoplasm. The protein localises to the cytoskeleton. It is found in the spindle pole. The protein resides in the midbody. Its subcellular location is the microtubule organizing center. It localises to the centrosome. The enzyme catalyses Couples ATP hydrolysis with the unwinding of duplex DNA at the replication fork by translocating in the 5'-3' direction. This creates two antiparallel DNA single strands (ssDNA). The leading ssDNA polymer is the template for DNA polymerase III holoenzyme which synthesizes a continuous strand.. The catalysed reaction is ATP + H2O = ADP + phosphate + H(+). Functionally, DNA-dependent ATPase and ATP-dependent DNA helicase that participates in various functions in genomic stability, including DNA replication, DNA repair and heterochromatin organization as well as in ribosomal RNA synthesis. Its double-stranded DNA helicase activity requires either a minimal 5'-single-stranded tail length of approximately 15 nt (flap substrates) or 10 nt length single-stranded gapped DNA substrates of a partial duplex DNA structure for helicase loading and translocation along DNA in a 5' to 3' direction. The helicase activity is capable of displacing duplex regions up to 100 bp, which can be extended up to 500 bp by the replication protein A (RPA) or the cohesion CTF18-replication factor C (Ctf18-RFC) complex activities. Also shows ATPase- and helicase activities on substrates that mimic key DNA intermediates of replication, repair and homologous recombination reactions, including forked duplex, anti-parallel G-quadruplex and three-stranded D-loop DNA molecules. Plays a role in DNA double-strand break (DSB) repair at the DNA replication fork during DNA replication recovery from DNA damage. Recruited with TIMELESS factor upon DNA-replication stress response at DNA replication fork to preserve replication fork progression, and hence ensure DNA replication fidelity. Also cooperates with TIMELESS factor during DNA replication to regulate proper sister chromatid cohesion and mitotic chromosome segregation. Stimulates 5'-single-stranded DNA flap endonuclease activity of FEN1 in an ATP- and helicase-independent manner; and hence it may contribute in Okazaki fragment processing at DNA replication fork during lagging strand DNA synthesis. Its ability to function at DNA replication fork is modulated by its binding to long non-coding RNA (lncRNA) cohesion regulator non-coding RNA DDX11-AS1/CONCR, which is able to increase both DDX11 ATPase activity and binding to DNA replicating regions. Also plays a role in heterochromatin organization. Involved in rRNA transcription activation through binding to active hypomethylated rDNA gene loci by recruiting UBTF and the RNA polymerase Pol I transcriptional machinery. Plays a role in embryonic development and prevention of aneuploidy. Involved in melanoma cell proliferation and survival. Associates with chromatin at DNA replication fork regions. Binds to single- and double-stranded DNAs. This Mus musculus (Mouse) protein is ATP-dependent DNA helicase DDX11.